A 185-amino-acid polypeptide reads, in one-letter code: Ribosome-recycling factor (185 aa).

The protein belongs to the RRF family.

The protein resides in the cytoplasm. In terms of biological role, responsible for the release of ribosomes from messenger RNA at the termination of protein biosynthesis. May increase the efficiency of translation by recycling ribosomes from one round of translation to another. The sequence is that of Ribosome-recycling factor from Shewanella denitrificans (strain OS217 / ATCC BAA-1090 / DSM 15013).